The sequence spans 431 residues: MRRLRRLVHLVLLCPFSKGLQGRLPGLRVKYVLLVWLGIFVGSWMVYVHYSSYSELCRGHVCQVVICDQYQKGIISGSVCQDLCELQKVEWRTCLSSAPGQQVYSGLWQDKEVTIKCGIEEALNSKAWPDAVPRRELVLFDKPTRGTSIKEFREMTLSFLKANLGDLPSLPALVDQILLMADFNKDSRVSLAEAKSVWALLQRNEFLLLLSLQEKEHASRLLGYCGDLYLTESIPHGSWHGAVLLPALRPLLPSVLHRALQQWFGPAWPWRAKIAIGLLEFVEELFHGSYGTFYMCETTLANVGYTATYDFKMADLQQVAPEATVRRFLQGRHCEQSSDCIYGRDCRAPCDKLMRQCKGDLIQPNLAKVCELLRDYLLPGAPADLYEELGKQLRTCTTLSGLASQVEAHHSLVLSHLKTLLWREISNTNYS.

The Cytoplasmic portion of the chain corresponds to 1–30 (MRRLRRLVHLVLLCPFSKGLQGRLPGLRVK). The short motif at 5 to 6 (RR) is the May mediate ER retention element. Residues 31 to 51 (YVLLVWLGIFVGSWMVYVHYS) form a helical membrane-spanning segment. Over 52–431 (SYSELCRGHV…WREISNTNYS (380 aa)) the chain is Lumenal. 2 disulfides stabilise this stretch: Cys57–Cys94 and Cys62–Cys117.

Belongs to the DIPK family. Post-translationally, among the many cysteines in the lumenal domain, most are probably involved in disulfide bonds.

It is found in the endoplasmic reticulum membrane. The polypeptide is Divergent protein kinase domain 1B (Rattus norvegicus (Rat)).